We begin with the raw amino-acid sequence, 71 residues long: MAKDAIKLRAKVLEAYSMDDYLVELENKQQIKAKISGKMRVNRIRILPGDLVDVELSSYDLTKGRITYRHK.

The region spanning 1-71 (MAKDAIKLRA…TKGRITYRHK (71 aa)) is the S1-like domain.

The protein belongs to the IF-1 family. Component of the 30S ribosomal translation pre-initiation complex which assembles on the 30S ribosome in the order IF-2 and IF-3, IF-1 and N-formylmethionyl-tRNA(fMet); mRNA recruitment can occur at any time during PIC assembly.

The protein resides in the cytoplasm. Its function is as follows. One of the essential components for the initiation of protein synthesis. Stabilizes the binding of IF-2 and IF-3 on the 30S subunit to which N-formylmethionyl-tRNA(fMet) subsequently binds. Helps modulate mRNA selection, yielding the 30S pre-initiation complex (PIC). Upon addition of the 50S ribosomal subunit IF-1, IF-2 and IF-3 are released leaving the mature 70S translation initiation complex. This is Translation initiation factor IF-1 from Mycoplasmopsis synoviae (strain 53) (Mycoplasma synoviae).